The following is a 145-amino-acid chain: Large ribosomal subunit protein uL15 (145 aa).

Residues 1–54 (MKLNELKYTPGSKKEATRVGRGMASGKGKTATRGHKGQNSRSGGGVRPGFEGGQ) are disordered. Gly residues predominate over residues 42-52 (SGGGVRPGFEG).

The protein belongs to the universal ribosomal protein uL15 family. As to quaternary structure, part of the 50S ribosomal subunit.

Binds to the 23S rRNA. This is Large ribosomal subunit protein uL15 from Mycoplasma capricolum subsp. capricolum (strain California kid / ATCC 27343 / NCTC 10154).